Consider the following 676-residue polypeptide: Transcription factor RLM1 (676 aa).

An MADS-box domain is found at 3 to 57 (RRKIEIQRISDDRNRAVTFIKRKAGLFKKAHELSVLCQVDIAVIILGSNNTFYEF). Residues 58–87 (SSVDTNDLIYHYQNDKNLLHEVKDPSDYGD) constitute a DNA-binding region (mef2-type). A compositionally biased stretch (polar residues) spans 103-120 (SSMSNKPSKSNVKGMNQS). Residues 103 to 156 (SSMSNKPSKSNVKGMNQSENDDDENNDEDDDDHGNFERNSNMHSNKKASDKNIP) are disordered. Residue S120 is modified to Phosphoserine. Residues 121 to 134 (ENDDDENNDEDDDD) are compositionally biased toward acidic residues. Phosphoserine is present on S164. Residues 173 to 183 (DGSEQNKRHPE) are compositionally biased toward basic and acidic residues. 5 disordered regions span residues 173-192 (DGSE…LQHL), 202-318 (ISRT…RRKL), 330-424 (NNNF…PFGS), 472-514 (KKQS…VHDL), and 532-631 (MGPN…NSST). Polar residues predominate over residues 260 to 276 (ISPNKFSKPFTNASSRT). Low complexity predominate over residues 284-295 (NNSGSNNNDNSN). The span at 296–312 (YTQSPSNSLEDSIQQTV) shows a compositional bias: polar residues. Composition is skewed to low complexity over residues 334–359 (SSNS…MGSS), 368–381 (SRSS…ASAS), and 399–417 (PNAN…NNNN). S374 and S377 each carry phosphoserine. Residues 472-506 (KKQSQTVPLTTTLTGRPPSTFSGPETSNGPPTGSL) show a composition bias toward polar residues. Residues 539-604 (PGNTNNPGTF…NSNNSYYSNN (66 aa)) are compositionally biased toward low complexity. Polar residues predominate over residues 621 to 631 (GDSNNQSNSST).

It belongs to the MEF2 family. As to quaternary structure, can heterodimerize with SPM1. Interacts with KDX1 and SLT2. Post-translationally, phosphorylated by SLT2.

It is found in the nucleus. In terms of biological role, may function as a transcription factor downstream of MPK1 that is subject to activation by the MPK1 mitogen-activated protein kinase pathway. Binds to the DNA sequence 5'-CTA[TA](4)TAG-3'. At least some RML1 target genes are involved in cell wall biosynthesis. This chain is Transcription factor RLM1 (RLM1), found in Saccharomyces cerevisiae (strain ATCC 204508 / S288c) (Baker's yeast).